Consider the following 120-residue polypeptide: UPF0231 protein YacL (120 aa).

The protein belongs to the UPF0231 family.

In Shigella flexneri, this protein is UPF0231 protein YacL (yacL).